A 215-amino-acid chain; its full sequence is Cytochrome b6 (215 aa).

The chain crosses the membrane as a helical span at residues 32–52 (IFYCLGGITLTCFLVQVATGF). A heme c-binding site is contributed by C35. The heme b site is built by H86 and H100. Helical transmembrane passes span 90 to 110 (ASMM…TGGF), 116 to 136 (LTWV…VTGY), and 186 to 206 (LHTF…FLMI). Heme b contacts are provided by H187 and H202.

This sequence belongs to the cytochrome b family. PetB subfamily. As to quaternary structure, the 4 large subunits of the cytochrome b6-f complex are cytochrome b6, subunit IV (17 kDa polypeptide, PetD), cytochrome f and the Rieske protein, while the 4 small subunits are PetG, PetL, PetM and PetN. The complex functions as a dimer. Heme b is required as a cofactor. The cofactor is heme c.

The protein localises to the plastid. Its subcellular location is the chloroplast thylakoid membrane. In terms of biological role, component of the cytochrome b6-f complex, which mediates electron transfer between photosystem II (PSII) and photosystem I (PSI), cyclic electron flow around PSI, and state transitions. This chain is Cytochrome b6, found in Pelargonium hortorum (Common geranium).